We begin with the raw amino-acid sequence, 304 residues long: Coenzyme PQQ synthesis protein B (304 aa).

The protein belongs to the PqqB family.

Its pathway is cofactor biosynthesis; pyrroloquinoline quinone biosynthesis. In terms of biological role, may be involved in the transport of PQQ or its precursor to the periplasm. This is Coenzyme PQQ synthesis protein B from Azoarcus sp. (strain BH72).